The chain runs to 878 residues: Glycogen [starch] synthase (878 aa).

K61 is a UDP-alpha-D-glucose binding site. Disordered stretches follow at residues 637–721 (PPKP…NVIP) and 746–878 (NEFK…KSLK). Low complexity-rich tracts occupy residues 641–656 (ISRSPSPSPSSSLKLS) and 666–676 (QQQQQQQQPQP). Over residues 677–692 (IGTTINLIPPSSNVSV) the composition is skewed to polar residues. Composition is skewed to low complexity over residues 693–715 (TPTTTPTTTTTATTATTAPITTP), 746–781 (NEFKKQQQQQQQSKTPTTPTTTSTTTTTPSTTAAAT), 795–830 (PNTSSFIPTNKGSTATTTTTTATPTPTPSNNTNGKP), and 838–878 (TKSN…KSLK).

Belongs to the glycosyltransferase 3 family.

It carries out the reaction [(1-&gt;4)-alpha-D-glucosyl](n) + UDP-alpha-D-glucose = [(1-&gt;4)-alpha-D-glucosyl](n+1) + UDP + H(+). Its pathway is glycan biosynthesis; glycogen biosynthesis. Catalyzes the formation of apha-1,4 glycosidic bonds adding glucose residue from UDPG to the growing chain of glycogen. This Dictyostelium discoideum (Social amoeba) protein is Glycogen [starch] synthase (glcS).